A 1501-amino-acid chain; its full sequence is Multidrug resistance protein CDR1 (1501 aa).

The segment at 1–30 is disordered; the sequence is MSDSKMSSQDESKLEKAISQDSSSENHSIN. Over 1–513 the chain is Cytoplasmic; the sequence is MSDSKMSSQD…NFLRMKGDPS (513 aa). The segment covering 8–18 has biased composition (basic and acidic residues); that stretch reads SQDESKLEKAI. The ABC transporter 1 domain occupies 150–404; sequence LATEGFRHFQ…FEKMGWKCPQ (255 aa). Residues 514–534 traverse the membrane as a helical segment; that stretch reads IPIFSVFGQLVMGLILSSVFY. An N-linked (GlcNAc...) asparagine glycan is attached at asparagine 535. Helical transmembrane passes span 549 to 569, 598 to 618, 623 to 643, and 655 to 675; these read AMFF…MSLF, LPVK…MVNF, GRFF…SHLF, and GAMT…GFVI. N-linked (GlcNAc...) asparagine glycosylation is present at asparagine 724. The chain crosses the membrane as a helical span at residues 765-785; that stretch reads LGITIGFAVFFLAIYIALTEF. The Cytoplasmic segment spans residues 786-1195; the sequence is NKGAMQKGEI…TIVQDWRSPG (410 aa). The ABC transporter 2 domain occupies 859-1103; the sequence is FFWRDLTYQV…MINYFEKYGA (245 aa). 895–902 provides a ligand contact to ATP; the sequence is GASGAGKT. Helical transmembrane passes span 1196-1216, 1230-1250, 1281-1301, 1315-1335, 1356-1376, and 1467-1487; these read YIYS…FSFF, FSVF…LPYF, IPYQ…PLGL, GVLM…MGQL, MCLN…FWIF, and FGIF…FYWL.

The protein belongs to the ABC transporter superfamily. ABCG family. PDR (TC 3.A.1.205) subfamily.

It localises to the membrane. Functionally, transporter, whose physiological function is not yet established. Confers resistance to the chemical cycloheximide. This Candida albicans (Yeast) protein is Multidrug resistance protein CDR1 (CDR1).